An 828-amino-acid chain; its full sequence is Glycerol-3-phosphate acyltransferase (828 aa).

The HXXXXD motif motif lies at 309 to 314 (CHRSHI).

This sequence belongs to the GPAT/DAPAT family.

It is found in the cell inner membrane. It catalyses the reaction sn-glycerol 3-phosphate + an acyl-CoA = a 1-acyl-sn-glycero-3-phosphate + CoA. It functions in the pathway phospholipid metabolism; CDP-diacylglycerol biosynthesis; CDP-diacylglycerol from sn-glycerol 3-phosphate: step 1/3. In Pseudomonas putida (strain W619), this protein is Glycerol-3-phosphate acyltransferase.